Reading from the N-terminus, the 38-residue chain is Large ribosomal subunit protein bL36A (38 aa).

This sequence belongs to the bacterial ribosomal protein bL36 family.

This Prochlorococcus marinus (strain MIT 9515) protein is Large ribosomal subunit protein bL36A.